We begin with the raw amino-acid sequence, 359 residues long: UDP-N-acetylglucosamine--N-acetylmuramyl-(pentapeptide) pyrophosphoryl-undecaprenol N-acetylglucosamine transferase (359 aa).

UDP-N-acetyl-alpha-D-glucosamine-binding positions include 14 to 16 (TGG), N126, R166, S194, I248, and Q293.

It belongs to the glycosyltransferase 28 family. MurG subfamily.

The protein localises to the cell inner membrane. It carries out the reaction di-trans,octa-cis-undecaprenyl diphospho-N-acetyl-alpha-D-muramoyl-L-alanyl-D-glutamyl-meso-2,6-diaminopimeloyl-D-alanyl-D-alanine + UDP-N-acetyl-alpha-D-glucosamine = di-trans,octa-cis-undecaprenyl diphospho-[N-acetyl-alpha-D-glucosaminyl-(1-&gt;4)]-N-acetyl-alpha-D-muramoyl-L-alanyl-D-glutamyl-meso-2,6-diaminopimeloyl-D-alanyl-D-alanine + UDP + H(+). It functions in the pathway cell wall biogenesis; peptidoglycan biosynthesis. Functionally, cell wall formation. Catalyzes the transfer of a GlcNAc subunit on undecaprenyl-pyrophosphoryl-MurNAc-pentapeptide (lipid intermediate I) to form undecaprenyl-pyrophosphoryl-MurNAc-(pentapeptide)GlcNAc (lipid intermediate II). In Verminephrobacter eiseniae (strain EF01-2), this protein is UDP-N-acetylglucosamine--N-acetylmuramyl-(pentapeptide) pyrophosphoryl-undecaprenol N-acetylglucosamine transferase.